The sequence spans 230 residues: Urease accessory protein UreG (230 aa).

33–40 (GPVGSGKT) provides a ligand contact to GTP.

Belongs to the SIMIBI class G3E GTPase family. UreG subfamily. As to quaternary structure, homodimer. UreD, UreF and UreG form a complex that acts as a GTP-hydrolysis-dependent molecular chaperone, activating the urease apoprotein by helping to assemble the nickel containing metallocenter of UreC. The UreE protein probably delivers the nickel.

Its subcellular location is the cytoplasm. In terms of biological role, facilitates the functional incorporation of the urease nickel metallocenter. This process requires GTP hydrolysis, probably effectuated by UreG. The protein is Urease accessory protein UreG of Mycobacteroides abscessus (strain ATCC 19977 / DSM 44196 / CCUG 20993 / CIP 104536 / JCM 13569 / NCTC 13031 / TMC 1543 / L948) (Mycobacterium abscessus).